Consider the following 453-residue polypeptide: Protein IVY1 (453 aa).

Polar residues predominate over residues 1–16 (MPDNNTEQLQGSPSSD). The disordered stretch occupies residues 1 to 20 (MPDNNTEQLQGSPSSDQRLR). A phosphoserine mark is found at S59, S84, and S85. Coiled coils occupy residues 102 to 122 (KRDVKETQEALSTLLRNSNAY) and 230 to 257 (IRNLISYRESLSSLQARLDQLETLKHDF). Disordered stretches follow at residues 316–340 (DGPYGTIGGDGETAGEAYNSDEETG) and 353–453 (TSQP…SSNI). Phosphoserine is present on S335. Residues 353-371 (TSQPSTSKTSLPKSKGSST) are compositionally biased toward low complexity. Polar residues-rich tracts occupy residues 372–384 (VSTPNHSQSSSNK) and 404–429 (LMGTENSFSLPPTRNSAEETTQTFKQ). Residues 431–442 (SIKEDNDNHSSD) are compositionally biased toward basic and acidic residues. Residues 443–453 (TDGMQDQSSNI) are compositionally biased toward polar residues.

In terms of assembly, homomultimer. Interacts with YPT7 and VPS33.

It localises to the vacuole membrane. Functionally, may be required for vacuolar fusion. Overexpression leads to fragmentation of vacuoles, missorting of the vacuolar enzyme carboxypeptidase Y (CPY) to the exterior of the cell and accumulation of multivesicular bodies inside the cell. The sequence is that of Protein IVY1 (IVY1) from Saccharomyces cerevisiae (strain ATCC 204508 / S288c) (Baker's yeast).